Consider the following 444-residue polypeptide: Tol-Pal system protein TolB (444 aa).

The N-terminal stretch at 1-19 (MRNIIYFILSLLFSVTSYA) is a signal peptide.

This sequence belongs to the TolB family. The Tol-Pal system is composed of five core proteins: the inner membrane proteins TolA, TolQ and TolR, the periplasmic protein TolB and the outer membrane protein Pal. They form a network linking the inner and outer membranes and the peptidoglycan layer.

Its subcellular location is the periplasm. Functionally, part of the Tol-Pal system, which plays a role in outer membrane invagination during cell division and is important for maintaining outer membrane integrity. This is Tol-Pal system protein TolB from Rickettsia africae (strain ESF-5).